Consider the following 144-residue polypeptide: Large ribosomal subunit protein uL15 (144 aa).

A disordered region spans residues 1 to 57 (MELNNLKPAEGAKHAKRRVGRGIGSGLGKTAGRGHKGQKSRSGGFHKVGFEGGQMPL). Positions 21–31 (RGIGSGLGKTA) are enriched in gly residues.

It belongs to the universal ribosomal protein uL15 family. Part of the 50S ribosomal subunit.

Its function is as follows. Binds to the 23S rRNA. The sequence is that of Large ribosomal subunit protein uL15 from Paraburkholderia xenovorans (strain LB400).